Consider the following 293-residue polypeptide: ATP synthase gamma chain (293 aa).

It belongs to the ATPase gamma chain family. F-type ATPases have 2 components, CF(1) - the catalytic core - and CF(0) - the membrane proton channel. CF(1) has five subunits: alpha(3), beta(3), gamma(1), delta(1), epsilon(1). CF(0) has three main subunits: a, b and c.

Its subcellular location is the cell inner membrane. In terms of biological role, produces ATP from ADP in the presence of a proton gradient across the membrane. The gamma chain is believed to be important in regulating ATPase activity and the flow of protons through the CF(0) complex. In Chlorobium chlorochromatii (strain CaD3), this protein is ATP synthase gamma chain.